Consider the following 950-residue polypeptide: 2-oxoglutarate dehydrogenase E1 component (950 aa).

Belongs to the alpha-ketoglutarate dehydrogenase family. Homodimer. Part of the 2-oxoglutarate dehydrogenase (OGDH) complex composed of E1 (2-oxoglutarate dehydrogenase), E2 (dihydrolipoamide succinyltransferase) and E3 (dihydrolipoamide dehydrogenase); the complex contains multiple copies of the three enzymatic components (E1, E2 and E3). Thiamine diphosphate serves as cofactor.

It catalyses the reaction N(6)-[(R)-lipoyl]-L-lysyl-[protein] + 2-oxoglutarate + H(+) = N(6)-[(R)-S(8)-succinyldihydrolipoyl]-L-lysyl-[protein] + CO2. E1 component of the 2-oxoglutarate dehydrogenase (OGDH) complex which catalyzes the decarboxylation of 2-oxoglutarate, the first step in the conversion of 2-oxoglutarate to succinyl-CoA and CO(2). The protein is 2-oxoglutarate dehydrogenase E1 component of Geobacillus kaustophilus (strain HTA426).